The sequence spans 1097 residues: DNA-directed RNA polymerase subunit beta (1097 aa).

Positions 1072 to 1097 are disordered; it reads QDVNPRRSTPSRPTYESLGVADYDED.

It belongs to the RNA polymerase beta chain family. In terms of assembly, in cyanobacteria the RNAP catalytic core is composed of 2 alpha, 1 beta, 1 beta', 1 gamma and 1 omega subunit. When a sigma factor is associated with the core the holoenzyme is formed, which can initiate transcription.

The catalysed reaction is RNA(n) + a ribonucleoside 5'-triphosphate = RNA(n+1) + diphosphate. Functionally, DNA-dependent RNA polymerase catalyzes the transcription of DNA into RNA using the four ribonucleoside triphosphates as substrates. This chain is DNA-directed RNA polymerase subunit beta, found in Synechococcus sp. (strain CC9605).